The chain runs to 291 residues: Probable prolyl 4-hydroxylase 12 (291 aa).

At 1–156 the chain is on the cytoplasmic side; that stretch reads MACLSRIFLI…GEEPSSVLHE (156 aa). The Fe2OG dioxygenase domain occupies 125 to 239; that stretch reads NGGSIKVRSY…LLVATKLIYA (115 aa). Fe cation contacts are provided by lysine 142 and aspartate 144. Residues 157-173 form a helical; Signal-anchor for type II membrane protein membrane-spanning segment; that stretch reads SLLATVVLYLSNTTQGG. The Lumenal segment spans residues 174 to 291; it reads ELLFPNSEMK…GTCRKSCNAC (118 aa). N-linked (GlcNAc...) asparagine glycosylation occurs at asparagine 211. Residue histidine 220 coordinates Fe cation. In terms of domain architecture, ShKT spans 251–291; sequence CSDEDENCGRWAKLGECKKNPVYMIGSPDYYGTCRKSCNAC. Disulfide bonds link cysteine 251–cysteine 291, cysteine 258–cysteine 284, and cysteine 267–cysteine 288.

It belongs to the P4HA family. Requires Fe(2+) as cofactor. L-ascorbate serves as cofactor.

It is found in the endoplasmic reticulum membrane. The catalysed reaction is L-prolyl-[collagen] + 2-oxoglutarate + O2 = trans-4-hydroxy-L-prolyl-[collagen] + succinate + CO2. Its function is as follows. Catalyzes the post-translational formation of 4-hydroxyproline in -Xaa-Pro-Gly- sequences in proline-rich peptide sequences of plant glycoproteins and other proteins. Hydroxyprolines are important constituent of many plant cell wall glycoproteins such as extensins, hydroxyproline-rich glycoproteins, lectins and arabinogalactan proteins. The sequence is that of Probable prolyl 4-hydroxylase 12 from Arabidopsis thaliana (Mouse-ear cress).